The chain runs to 106 residues: Nucleoid-associated protein RPA0616 (106 aa).

This sequence belongs to the YbaB/EbfC family. In terms of assembly, homodimer.

It localises to the cytoplasm. It is found in the nucleoid. Its function is as follows. Binds to DNA and alters its conformation. May be involved in regulation of gene expression, nucleoid organization and DNA protection. This Rhodopseudomonas palustris (strain ATCC BAA-98 / CGA009) protein is Nucleoid-associated protein RPA0616.